Reading from the N-terminus, the 420-residue chain is Dihydrolipoyllysine-residue succinyltransferase component of 2-oxoglutarate dehydrogenase complex (420 aa).

The 76-residue stretch at 1-76 (MAEVKVPELA…EVGQAVAVVG (76 aa)) folds into the Lipoyl-binding domain. K42 carries the post-translational modification N6-lipoyllysine. Residues 75–199 (VGEGQVNTSN…IREKMSRRKK (125 aa)) are disordered. Polar residues predominate over residues 81-90 (NTSNDSSNES). Positions 91–102 (SQKDEAKEKETP) are enriched in basic and acidic residues. Polar residues predominate over residues 103-127 (KQSNPNSSESENTQDNSQQRINATP). In terms of domain architecture, Peripheral subunit-binding (PSBD) spans 124 to 160 (NATPSARRHARKNGVDLSEVSGKGNDVLRKDDVENSQ). Positions 149–158 (DVLRKDDVEN) are enriched in basic and acidic residues. A compositionally biased stretch (low complexity) spans 159 to 174 (SQKSSSQTAKSESKSQ). Positions 175 to 186 (NSGSKQTNNNPS) are enriched in polar residues. Residues H391 and D395 contribute to the active site.

It belongs to the 2-oxoacid dehydrogenase family. As to quaternary structure, forms a 24-polypeptide structural core with octahedral symmetry. Part of the 2-oxoglutarate dehydrogenase (OGDH) complex composed of E1 (2-oxoglutarate dehydrogenase), E2 (dihydrolipoamide succinyltransferase) and E3 (dihydrolipoamide dehydrogenase); the complex contains multiple copies of the three enzymatic components (E1, E2 and E3). Requires (R)-lipoate as cofactor.

It catalyses the reaction N(6)-[(R)-dihydrolipoyl]-L-lysyl-[protein] + succinyl-CoA = N(6)-[(R)-S(8)-succinyldihydrolipoyl]-L-lysyl-[protein] + CoA. The protein operates within amino-acid degradation; L-lysine degradation via saccharopine pathway; glutaryl-CoA from L-lysine: step 6/6. In terms of biological role, E2 component of the 2-oxoglutarate dehydrogenase (OGDH) complex which catalyzes the second step in the conversion of 2-oxoglutarate to succinyl-CoA and CO(2). This Staphylococcus epidermidis (strain ATCC 35984 / DSM 28319 / BCRC 17069 / CCUG 31568 / BM 3577 / RP62A) protein is Dihydrolipoyllysine-residue succinyltransferase component of 2-oxoglutarate dehydrogenase complex (odhB).